The following is a 107-amino-acid chain: Small ribosomal subunit protein uS10 (107 aa).

Belongs to the universal ribosomal protein uS10 family. Part of the 30S ribosomal subunit.

Involved in the binding of tRNA to the ribosomes. This is Small ribosomal subunit protein uS10 from Deinococcus geothermalis (strain DSM 11300 / CIP 105573 / AG-3a).